Consider the following 75-residue polypeptide: UPF0346 protein LEUM_0763 (75 aa).

This sequence belongs to the UPF0346 family.

In Leuconostoc mesenteroides subsp. mesenteroides (strain ATCC 8293 / DSM 20343 / BCRC 11652 / CCM 1803 / JCM 6124 / NCDO 523 / NBRC 100496 / NCIMB 8023 / NCTC 12954 / NRRL B-1118 / 37Y), this protein is UPF0346 protein LEUM_0763.